A 532-amino-acid polypeptide reads, in one-letter code: Exopolysaccharide phosphotransferase CpsY (532 aa).

Belongs to the stealth family.

The sequence is that of Exopolysaccharide phosphotransferase CpsY (cpsY) from Mycobacterium bovis (strain ATCC BAA-935 / AF2122/97).